We begin with the raw amino-acid sequence, 446 residues long: Keratin, type I cytoskeletal 25 (446 aa).

The disordered stretch occupies residues 1 to 20 (MSLRLSSGSKRSYARPSTGS). The tract at residues 1 to 74 (MSLRLSSGSK…VNEGGLLSGN (74 aa)) is head. The coil 1A stretch occupies residues 75-110 (EKVTMQNLNDRLASYLDNVQALQEANADLEQKIKGW). An IF rod domain is found at 75 to 390 (EKVTMQNLND…LLIGGDEGAC (316 aa)). A linker 1 region spans residues 111-132 (YEKFGPGSCRGLDHDYSRYFPI). The coil 1B stretch occupies residues 133–224 (IDDLKNQIIT…KNHKEEMQAL (92 aa)). The segment at 225-247 (QCAAGGNVNVEMNAAPGVDLTVL) is linker 12. The interval 248–386 (LNNMRAEYEA…ETYCLLIGGD (139 aa)) is coil 2. The tract at residues 387 to 446 (EGACKSSSYKSKDYTSGNAGNQSKDSPKAIVVKKVLEEVDQRSKILTTRLHSLEEKSQSN) is tail. The segment at 394–413 (SYKSKDYTSGNAGNQSKDSP) is disordered. A compositionally biased stretch (polar residues) spans 400 to 410 (YTSGNAGNQSK). Ser438 is subject to Phosphoserine.

The protein belongs to the intermediate filament family. As to quaternary structure, heterodimer of a type I and a type II keratin. Heterodimer with type II keratin KRT5 leading to the formation of keratin intermediate filament (KIF) network. Interacts with KRT6A to form filaments.

The protein resides in the cytoplasm. Its function is as follows. Essential for the proper assembly of type I and type II keratin protein complexes and formation of keratin intermediate filaments in the inner root sheath (irs). Plays a role in the cytoskeleton organization. The chain is Keratin, type I cytoskeletal 25 from Rattus norvegicus (Rat).